An 86-amino-acid polypeptide reads, in one-letter code: Large ribosomal subunit protein bL27 (86 aa).

Positions 1–24 (MATKKAGGSSRNGRDSAGRRLGVK) are disordered.

Belongs to the bacterial ribosomal protein bL27 family.

The sequence is that of Large ribosomal subunit protein bL27 from Rickettsia felis (strain ATCC VR-1525 / URRWXCal2) (Rickettsia azadi).